The chain runs to 349 residues: tRNA pseudouridine synthase D (349 aa).

Residue phenylalanine 27 participates in substrate binding. The active-site Nucleophile is the aspartate 80. Asparagine 129 lines the substrate pocket. Residues 155-303 (GVPNYFGAQR…VEAARRAMLL (149 aa)) form the TRUD domain. Position 329 (phenylalanine 329) interacts with substrate.

It belongs to the pseudouridine synthase TruD family.

It catalyses the reaction uridine(13) in tRNA = pseudouridine(13) in tRNA. Functionally, responsible for synthesis of pseudouridine from uracil-13 in transfer RNAs. This Escherichia coli (strain SMS-3-5 / SECEC) protein is tRNA pseudouridine synthase D.